Reading from the N-terminus, the 88-residue chain is UPF0250 protein Sfri_0694 (88 aa).

It belongs to the UPF0250 family.

The sequence is that of UPF0250 protein Sfri_0694 from Shewanella frigidimarina (strain NCIMB 400).